The primary structure comprises 612 residues: MDANVQIRPARNNPSQGNQGRNNNNKRRRRRRGLKLPPVVAPITSPGQMAEPANHANTRVNRGRTRVRGLRQAMMESPMAATSEAWIHDYLDPDGEYKTSLDDGKIPDGAIPQSTCGQFRGTVGARYPGLNSTTLPLDGGTWPLLVMHLPFFRHPLLFITTTSNTEVEVTNADLDAFANDWNNRTDWTEATYPSWAQVGNVFYMVVPTEALTDVPPPTQLGVSGLLESYRLTSSGVTAYFNAPTLVNQGVAVIAQFQPDKEHQKENPDIVAGTTQTGGTLQLGGSGPNYTLTMTIGDQVEFGGAAIPLPTVSMGPMPESGQLVFQTANLTFDVGNTITITTTLPPGSVTGMWQFTASNGTDTVTVDAGARLYAFGANLDASELNLQDINSIKIPPTNMNQMMQATPKTIQFQLNETKGFYMPLRAFQPVFEMTMATSYGPVRWKTPRTTVVDYHRAIGGLQDTIDSNFAIGVAAMTGMSTSTVPYFKVFRRFEAIPAEGSPWGPFASATPPKDDVALTVARTWTDLHPFAYPERYNGFGALFAMVAKTIAQIPRYVRSAAGVANAVTDCIESATESVASNSTSERRQRRARRVGGIARGARNLVGRIGNLSL.

A disordered region spans residues 1–53; the sequence is MDANVQIRPARNNPSQGNQGRNNNNKRRRRRRGLKLPPVVAPITSPGQMAEPA. Residues 11–23 are compositionally biased toward low complexity; the sequence is RNNPSQGNQGRNN. Positions 24–34 are enriched in basic residues; it reads NNKRRRRRRGL.

Belongs to the tetravirus capsid protein family.

It localises to the virion. Its function is as follows. Self-assembles to form an icosahedral capsid with a T=4 symmetry, about 35 nm in diameter, and consisting of 240 copies of the two structural proteins. The protein is Capsid protein of Nudaurelia capensis beta virus (isolate Pine emperor moth/South Africa) (NbetaV).